Here is a 1200-residue protein sequence, read N- to C-terminus: uncharacterized protein (1200 aa).

Disordered stretches follow at residues 282 to 302 (SQESRGESPSREAGTSSGCTS), 323 to 372 (LSEA…PQGS), 392 to 491 (SQEP…KASL), 510 to 568 (RAKS…RIGA), and 1056 to 1200 (SCPE…LASL). A compositionally biased stretch (low complexity) spans 420 to 435 (ASSPRLSPASPAAAAS). The segment covering 437–448 (TKIEVKTKERNG) has biased composition (basic and acidic residues). Over residues 518 to 527 (GTTQTKTSGP) the composition is skewed to polar residues. The segment covering 1137–1153 (EDGKGSHKLPDPAREHL) has biased composition (basic and acidic residues). Residues 1160–1171 (RQQPPRQSQVPR) show a composition bias toward low complexity. Residues 1175 to 1200 (GSFSSEGTDSQTSLEDSPQTSPLASL) show a composition bias toward polar residues.

This is an uncharacterized protein from Homo sapiens (Human).